Reading from the N-terminus, the 478-residue chain is Bifunctional protein HldE (478 aa).

Positions 1-318 (MKITLPDFTR…ENAIHARPES (318 aa)) are ribokinase. Position 195–198 (195–198 (NLSE)) interacts with ATP. Residue Asp264 is part of the active site. The interval 344 to 478 (MTNGVFDILH…KTIISGSGKN (135 aa)) is cytidylyltransferase.

In the N-terminal section; belongs to the carbohydrate kinase PfkB family. The protein in the C-terminal section; belongs to the cytidylyltransferase family. Homodimer.

The enzyme catalyses D-glycero-beta-D-manno-heptose 7-phosphate + ATP = D-glycero-beta-D-manno-heptose 1,7-bisphosphate + ADP + H(+). The catalysed reaction is D-glycero-beta-D-manno-heptose 1-phosphate + ATP + H(+) = ADP-D-glycero-beta-D-manno-heptose + diphosphate. Its pathway is nucleotide-sugar biosynthesis; ADP-L-glycero-beta-D-manno-heptose biosynthesis; ADP-L-glycero-beta-D-manno-heptose from D-glycero-beta-D-manno-heptose 7-phosphate: step 1/4. It functions in the pathway nucleotide-sugar biosynthesis; ADP-L-glycero-beta-D-manno-heptose biosynthesis; ADP-L-glycero-beta-D-manno-heptose from D-glycero-beta-D-manno-heptose 7-phosphate: step 3/4. Catalyzes the phosphorylation of D-glycero-D-manno-heptose 7-phosphate at the C-1 position to selectively form D-glycero-beta-D-manno-heptose-1,7-bisphosphate. Functionally, catalyzes the ADP transfer from ATP to D-glycero-beta-D-manno-heptose 1-phosphate, yielding ADP-D-glycero-beta-D-manno-heptose. This Erwinia tasmaniensis (strain DSM 17950 / CFBP 7177 / CIP 109463 / NCPPB 4357 / Et1/99) protein is Bifunctional protein HldE.